The chain runs to 540 residues: CWF19-like protein 1 (540 aa).

Positions 265-326 are disordered; sequence ENPYRKSDKD…AKQPRKHPQP (62 aa). The span at 267–277 shows a compositional bias: basic and acidic residues; that stretch reads PYRKSDKDTPK.

Belongs to the CWF19 family.

In Xenopus laevis (African clawed frog), this protein is CWF19-like protein 1 (cwf19l1).